We begin with the raw amino-acid sequence, 393 residues long: Sulfite oxidase (393 aa).

Residues 1 to 27 (MPGIRGPSEYSQEPPRHPSLKVNAKEP) are disordered. The segment at 10–242 (YSQEPPRHPS…QGFFMQKDYK (233 aa)) is moco domain. Mo-molybdopterin-binding positions include 49 to 53 (YKRNH), Cys-98, 159 to 161 (SVD), His-202, Arg-207, and 218 to 220 (SVK). The tract at residues 243-393 (MFPPSVNWDN…VLLRLGHSNL (151 aa)) is homodimerization. The Microbody targeting signal motif lies at 391–393 (SNL).

As to quaternary structure, predominantly monomer; also homodimer. It depends on Mo-molybdopterin as a cofactor.

The protein resides in the peroxisome. It catalyses the reaction sulfite + O2 + H2O = sulfate + H2O2. The protein operates within energy metabolism; sulfur metabolism. In terms of biological role, probably involved in sulfite oxidative detoxification. This chain is Sulfite oxidase (SOX), found in Arabidopsis thaliana (Mouse-ear cress).